A 207-amino-acid polypeptide reads, in one-letter code: ATP synthase subunit 5, mitochondrial (207 aa).

The protein belongs to the ATPase delta chain family. As to quaternary structure, F-type ATPases have 2 components, CF(1) - the catalytic core - and CF(0) - the membrane proton channel. CF(1) has five subunits: alpha(3), beta(3), gamma(1), delta(1), epsilon(1). CF(0) has three main subunits: a, b and c.

It is found in the mitochondrion. Its subcellular location is the mitochondrion inner membrane. Mitochondrial membrane ATP synthase (F(1)F(0) ATP synthase or Complex V) produces ATP from ADP in the presence of a proton gradient across the membrane which is generated by electron transport complexes of the respiratory chain. F-type ATPases consist of two structural domains, F(1) - containing the extramembraneous catalytic core and F(0) - containing the membrane proton channel, linked together by a central stalk and a peripheral stalk. During catalysis, ATP synthesis in the catalytic domain of F(1) is coupled via a rotary mechanism of the central stalk subunits to proton translocation. Part of the complex F(0) domain and the peripheric stalk, which acts as a stator to hold the catalytic alpha(3)beta(3) subcomplex and subunit a/ATP6 static relative to the rotary elements. The chain is ATP synthase subunit 5, mitochondrial (ATP5) from Eremothecium gossypii (strain ATCC 10895 / CBS 109.51 / FGSC 9923 / NRRL Y-1056) (Yeast).